The chain runs to 285 residues: Probable endonuclease 4 (285 aa).

Residues histidine 69, histidine 109, glutamate 145, aspartate 179, histidine 182, histidine 216, aspartate 229, histidine 231, and glutamate 261 each contribute to the Zn(2+) site.

This sequence belongs to the AP endonuclease 2 family. The cofactor is Zn(2+).

It catalyses the reaction Endonucleolytic cleavage to 5'-phosphooligonucleotide end-products.. Its function is as follows. Endonuclease IV plays a role in DNA repair. It cleaves phosphodiester bonds at apurinic or apyrimidinic (AP) sites, generating a 3'-hydroxyl group and a 5'-terminal sugar phosphate. The chain is Probable endonuclease 4 from Salmonella paratyphi A (strain AKU_12601).